Consider the following 59-residue polypeptide: Large ribosomal subunit protein uL30 (59 aa).

The protein belongs to the universal ribosomal protein uL30 family. Part of the 50S ribosomal subunit.

This Geotalea uraniireducens (strain Rf4) (Geobacter uraniireducens) protein is Large ribosomal subunit protein uL30.